The following is a 175-amino-acid chain: Type-2 ice-structuring protein (175 aa).

Residues Met-1–Ala-16 form the signal peptide. A propeptide spanning residues Ala-17–Lys-33 is cleaved from the precursor. The C-type lectin domain maps to Thr-36–Ala-163. 5 disulfides stabilise this stretch: Cys-38-Cys-49, Cys-66-Cys-159, Cys-103-Cys-134, Cys-123-Cys-145, and Cys-135-Cys-151.

It localises to the secreted. In terms of biological role, antifreeze proteins lower the blood freezing point. The sequence is that of Type-2 ice-structuring protein from Osmerus mordax (Rainbow smelt).